Reading from the N-terminus, the 244-residue chain is Transcriptional activator protein PhzR (244 aa).

Positions 177-242 (AFNTDVEFSE…QAVSYAVALG (66 aa)) constitute an HTH luxR-type domain. Positions 201 to 220 (SEEIGVIMGVCTDTVNYHHR) form a DNA-binding region, H-T-H motif.

This sequence belongs to the autoinducer-regulated transcriptional regulatory protein family.

Its function is as follows. Positive regulator of phenazine antibiotic production. May activate the phenazine biosynthetic genes by binding to a DNA sequence upstream of them, or to an intermediate gene which, in turn, interacts with them. This Pseudomonas fluorescens protein is Transcriptional activator protein PhzR (phzR).